A 757-amino-acid polypeptide reads, in one-letter code: MDVNPTLLFLKVPAQNAISTTFPYTGDPPYSHGTGTGYTMDTVNRTHQYSERGRWTTNTETGAPQLNPIDGPLPEDNEPSGYAQTDCVLEAMAFLEESHPGIFENSCIETMEVVQQTRVDKLTQGRQTYDWTLNRNQPAATALANTIEVFRSNGLTANESGRLIDFLKDVMESMDKEEMEITTHFQRKRRVRDNVTKKMVTQRTIGKRKQRLNKRSYLIRALTLNTMTKDAERGKLKRRAIATPGMQIRGFVYFVETLARSICEKLEQSGLPVGGNEKKAKLANVVRKMMTNSQDTEISFTITGDNTKWNENQNPRMFLAMITYMTRNQPEWFRNVLSIAPIMFSNKMARLGKGYMFESKSMKLRTQIPAEMLANIDLKYFNDSTRKKIERIRPLLIDGTASLSPGMMMGMFNMLSTVLGVSILNLGQKRYTKTTYWWDGLQSSDDFALIVNAPNHEGIQAGVDRFYRTCKLLGINMSKKKSYINRTGTFEFTSFFYRYGFVANFSMELPSFGVSGINESADMSIGVTVIKNNMINNDLGPATAQMALQLFIKDYRYTYRCHRGDTQIQTRRSFEIKKLWEQTRSKAGLLVSDGGPNLYNIRNLHIPEVCLKWELMDEDYQGRLCNPLNPFVSHKEIESVNNAVMMPAHGPAKNMEYDAVATTHSWIPKRNRSILNTSQRGILEDEQMYQRCCNLFEKFFPSSSYRRPVGISSMVEAMVSRARIDARIDFESGRIKKEEFTEIMKICSTIEELRRQK.

The tract at residues 53 to 82 is disordered; it reads GRWTTNTETGAPQLNPIDGPLPEDNEPSGY. Residues 55-64 show a composition bias toward polar residues; the sequence is WTTNTETGAP. 2 consecutive short sequence motifs (nuclear localization signal) follow at residues 187 to 195 and 203 to 216; these read RKRRVRDNV and RTIG…NKRS. The promoter-binding site stretch occupies residues 249 to 256; sequence RGFVYFVE. The 198-residue stretch at 286–483 folds into the RdRp catalytic domain; the sequence is VRKMMTNSQD…GINMSKKKSY (198 aa).

Belongs to the influenza viruses polymerase PB1 family. In terms of assembly, influenza RNA polymerase is composed of three subunits: PB1, PB2 and PA. Interacts (via N-terminus) with PA (via C-terminus). Interacts (via C-terminus) with PB2 (via N-terminus); this interaction is essential for transcription initiation. Interacts (via C-terminus) with human PKP2 (via N-terminus); the interaction competitively inhibits the interaction between the RNA polymerase subunits PB1 and PB2. Phosphorylated by host PRKCA.

The protein resides in the host nucleus. It localises to the host cytoplasm. The catalysed reaction is RNA(n) + a ribonucleoside 5'-triphosphate = RNA(n+1) + diphosphate. In terms of biological role, RNA-dependent RNA polymerase which is responsible for replication and transcription of virus RNA segments. The transcription of viral mRNAs occurs by a unique mechanism called cap-snatching. 5' methylated caps of cellular mRNAs are cleaved after 10-13 nucleotides by PA. In turn, these short capped RNAs are used as primers by PB1 for transcription of viral mRNAs. During virus replication, PB1 initiates RNA synthesis and copy vRNA into complementary RNA (cRNA) which in turn serves as a template for the production of more vRNAs. In Influenza A virus (strain A/Hickox/1940 H1N1), this protein is RNA-directed RNA polymerase catalytic subunit.